The following is a 472-amino-acid chain: Tyrosine--tRNA ligase, mitochondrial (472 aa).

Residue Tyr-72 participates in L-tyrosine binding. Residue Asp-76 participates in ATP binding. The short motif at 77 to 86 is the 'HIGH' region element; it reads PTGDSLHVGH. The L-tyrosine site is built by Asp-116, Tyr-216, Gln-220, Asp-223, and Gln-242. Positions 269 and 279 each coordinate ATP. The short motif at 276–280 is the 'KMSKS' region element; it reads KLGKS. Lys-350 and Lys-362 each carry N6-acetyllysine.

The protein belongs to the class-I aminoacyl-tRNA synthetase family. In terms of assembly, homodimer.

It is found in the mitochondrion matrix. The enzyme catalyses tRNA(Tyr) + L-tyrosine + ATP = L-tyrosyl-tRNA(Tyr) + AMP + diphosphate + H(+). Functionally, catalyzes the attachment of tyrosine to tRNA(Tyr) in a two-step reaction: tyrosine is first activated by ATP to form Tyr-AMP and then transferred to the acceptor end of tRNA(Tyr). This chain is Tyrosine--tRNA ligase, mitochondrial (Yars2), found in Mus musculus (Mouse).